The following is a 479-amino-acid chain: Sulfate adenylyltransferase subunit 1 (479 aa).

Positions 25-239 (KSLLRFLTCG…EVLETVDIQR (215 aa)) constitute a tr-type G domain. Positions 34–41 (GSVDDGKS) are G1. 34–41 (GSVDDGKS) lines the GTP pocket. The G2 stretch occupies residues 92–96 (GITID). Positions 113-116 (DTPG) are G3. GTP is bound by residues 113–117 (DTPGH) and 168–171 (NKMD). The segment at 168 to 171 (NKMD) is G4. Residues 206–208 (SAL) form a G5 region.

Belongs to the TRAFAC class translation factor GTPase superfamily. Classic translation factor GTPase family. CysN/NodQ subfamily. In terms of assembly, heterodimer composed of CysD, the smaller subunit, and CysN.

The enzyme catalyses sulfate + ATP + H(+) = adenosine 5'-phosphosulfate + diphosphate. It functions in the pathway sulfur metabolism; hydrogen sulfide biosynthesis; sulfite from sulfate: step 1/3. Its function is as follows. With CysD forms the ATP sulfurylase (ATPS) that catalyzes the adenylation of sulfate producing adenosine 5'-phosphosulfate (APS) and diphosphate, the first enzymatic step in sulfur assimilation pathway. APS synthesis involves the formation of a high-energy phosphoric-sulfuric acid anhydride bond driven by GTP hydrolysis by CysN coupled to ATP hydrolysis by CysD. In Salmonella heidelberg (strain SL476), this protein is Sulfate adenylyltransferase subunit 1.